Reading from the N-terminus, the 265-residue chain is Ribosomal RNA small subunit methyltransferase A (265 aa).

S-adenosyl-L-methionine is bound by residues His-17, Leu-19, Gly-44, Glu-65, Asp-90, and Asn-112.

It belongs to the class I-like SAM-binding methyltransferase superfamily. rRNA adenine N(6)-methyltransferase family. RsmA subfamily.

The protein resides in the cytoplasm. It catalyses the reaction adenosine(1518)/adenosine(1519) in 16S rRNA + 4 S-adenosyl-L-methionine = N(6)-dimethyladenosine(1518)/N(6)-dimethyladenosine(1519) in 16S rRNA + 4 S-adenosyl-L-homocysteine + 4 H(+). In terms of biological role, specifically dimethylates two adjacent adenosines (A1518 and A1519) in the loop of a conserved hairpin near the 3'-end of 16S rRNA in the 30S particle. May play a critical role in biogenesis of 30S subunits. The sequence is that of Ribosomal RNA small subunit methyltransferase A from Xylella fastidiosa (strain 9a5c).